A 321-amino-acid chain; its full sequence is Acetyl-coenzyme A carboxylase carboxyl transferase subunit alpha (321 aa).

In terms of domain architecture, CoA carboxyltransferase C-terminal spans 39–293 (RLEVKSQALT…KRALAEALRQ (255 aa)).

This sequence belongs to the AccA family. In terms of assembly, acetyl-CoA carboxylase is a heterohexamer composed of biotin carboxyl carrier protein (AccB), biotin carboxylase (AccC) and two subunits each of ACCase subunit alpha (AccA) and ACCase subunit beta (AccD).

The protein resides in the cytoplasm. It carries out the reaction N(6)-carboxybiotinyl-L-lysyl-[protein] + acetyl-CoA = N(6)-biotinyl-L-lysyl-[protein] + malonyl-CoA. It participates in lipid metabolism; malonyl-CoA biosynthesis; malonyl-CoA from acetyl-CoA: step 1/1. Functionally, component of the acetyl coenzyme A carboxylase (ACC) complex. First, biotin carboxylase catalyzes the carboxylation of biotin on its carrier protein (BCCP) and then the CO(2) group is transferred by the carboxyltransferase to acetyl-CoA to form malonyl-CoA. The polypeptide is Acetyl-coenzyme A carboxylase carboxyl transferase subunit alpha (Azoarcus sp. (strain BH72)).